The sequence spans 1243 residues: DNA polymerase II large subunit (1243 aa).

It belongs to the archaeal DNA polymerase II family. Heterodimer of a large subunit and a small subunit.

The catalysed reaction is DNA(n) + a 2'-deoxyribonucleoside 5'-triphosphate = DNA(n+1) + diphosphate. It catalyses the reaction Exonucleolytic cleavage in the 3'- to 5'-direction to yield nucleoside 5'-phosphates.. Its function is as follows. Possesses two activities: a DNA synthesis (polymerase) and an exonucleolytic activity that degrades single-stranded DNA in the 3'- to 5'-direction. Has a template-primer preference which is characteristic of a replicative DNA polymerase. This chain is DNA polymerase II large subunit, found in Nanoarchaeum equitans (strain Kin4-M).